The primary structure comprises 251 residues: Segregation and condensation protein A (251 aa).

It belongs to the ScpA family. Component of a cohesin-like complex composed of ScpA, ScpB and the Smc homodimer, in which ScpA and ScpB bind to the head domain of Smc. The presence of the three proteins is required for the association of the complex with DNA.

It localises to the cytoplasm. Functionally, participates in chromosomal partition during cell division. May act via the formation of a condensin-like complex containing Smc and ScpB that pull DNA away from mid-cell into both cell halves. This Clostridium botulinum (strain Eklund 17B / Type B) protein is Segregation and condensation protein A.